The chain runs to 137 residues: Small ribosomal subunit protein uS9 (137 aa).

The disordered stretch occupies residues 118–137 (KERKKYGLRKARKAPQYSKR).

Belongs to the universal ribosomal protein uS9 family.

The chain is Small ribosomal subunit protein uS9 from Acaryochloris marina (strain MBIC 11017).